The sequence spans 327 residues: L-serine dehydratase/L-threonine deaminase (327 aa).

Ala-2 bears the N-acetylalanine mark. Lys-41 is subject to N6-(pyridoxal phosphate)lysine. Pro-128 provides a ligand contact to pyridoxal 5'-phosphate.

The protein belongs to the serine/threonine dehydratase family. As to quaternary structure, homodimer. Requires pyridoxal 5'-phosphate as cofactor.

It is found in the cytoplasm. The catalysed reaction is L-serine = pyruvate + NH4(+). The enzyme catalyses L-threonine = 2-oxobutanoate + NH4(+). It participates in carbohydrate biosynthesis; gluconeogenesis. Catalyzes the pyridoxal-phosphate-dependent dehydrative deamination of L-threonine and L-serine to ammonia and alpha-ketobutyrate and pyruvate, respectively. The sequence is that of L-serine dehydratase/L-threonine deaminase (Sds) from Mus musculus (Mouse).